The chain runs to 139 residues: Aspartate 1-decarboxylase (139 aa).

Residue Ser-25 is the Schiff-base intermediate with substrate; via pyruvic acid of the active site. Pyruvic acid (Ser) is present on Ser-25. Residue Thr-57 coordinates substrate. Tyr-58 acts as the Proton donor in catalysis. A substrate-binding site is contributed by 73-75; the sequence is GAA. A disordered region spans residues 117 to 139; that stretch reads LGADPAEPVPGSDQARSPQAVTA. Positions 130 to 139 are enriched in polar residues; that stretch reads QARSPQAVTA.

Belongs to the PanD family. Heterooctamer of four alpha and four beta subunits. Pyruvate serves as cofactor. Post-translationally, is synthesized initially as an inactive proenzyme, which is activated by self-cleavage at a specific serine bond to produce a beta-subunit with a hydroxyl group at its C-terminus and an alpha-subunit with a pyruvoyl group at its N-terminus.

The protein resides in the cytoplasm. It carries out the reaction L-aspartate + H(+) = beta-alanine + CO2. It participates in cofactor biosynthesis; (R)-pantothenate biosynthesis; beta-alanine from L-aspartate: step 1/1. Catalyzes the pyruvoyl-dependent decarboxylation of aspartate to produce beta-alanine. This chain is Aspartate 1-decarboxylase, found in Streptomyces avermitilis (strain ATCC 31267 / DSM 46492 / JCM 5070 / NBRC 14893 / NCIMB 12804 / NRRL 8165 / MA-4680).